The primary structure comprises 316 residues: PAK4-inhibitor inka2 (316 aa).

2 disordered regions span residues 43–74 and 108–130; these read RSSP…SHRT and YSEV…ESET. The segment covering 65-74 has biased composition (basic and acidic residues); sequence RRDNRISHRT. Acidic residues predominate over residues 119-129; the sequence is EEDDIVEEESE. Residues 182–219 are inka box; sequence DSQDWTGCLLSQSRSRQPLVLGDNSFADLVKQWMDLPE.

This sequence belongs to the INKA family.

The protein resides in the nucleus. Inhibitor of the serine/threonine-protein kinase pak4/pak5. Acts by binding pak4/pak5 in a substrate-like manner, inhibiting the protein kinase activity. This Xenopus laevis (African clawed frog) protein is PAK4-inhibitor inka2.